We begin with the raw amino-acid sequence, 394 residues long: RILP-like protein 1 (394 aa).

In terms of domain architecture, RH1 spans 2-89; it reads EGISALEKNV…RLERMDRIEK (88 aa). The stretch at 68 to 312 forms a coiled coil; it reads EMEELRLELD…KVFMLQEELA (245 aa). The 66-residue stretch at 282 to 347 folds into the RH2 domain; it reads RPRFTLQELR…IPQESGIKRL (66 aa). Positions 318-337 are disordered; that stretch reads EADEEHKLPQSSPVIDSKAP.

This sequence belongs to the RILPL family.

It localises to the cytoplasm. The protein localises to the cytosol. It is found in the cytoskeleton. The protein resides in the microtubule organizing center. Its subcellular location is the centrosome. It localises to the cell projection. The protein localises to the cilium. Plays a role in the regulation of cell shape and polarity. Plays a role in cellular protein transport, including protein transport away from primary cilia. Neuroprotective protein. This is RILP-like protein 1 (rilpl1) from Xenopus tropicalis (Western clawed frog).